Reading from the N-terminus, the 574-residue chain is FAD-linked oxidoreductase penH (574 aa).

Positions 1–25 (MLPRALTLSALLALLLAIYLALAPA) are cleaved as a signal peptide. 5 N-linked (GlcNAc...) asparagine glycosylation sites follow: Asn-48, Asn-107, Asn-193, Asn-368, and Asn-385. In terms of domain architecture, FAD-binding PCMH-type spans 121–305 (HQGRIPLYAA…VRVTMRTYPD (185 aa)).

This sequence belongs to the oxygen-dependent FAD-linked oxidoreductase family. Requires FAD as cofactor.

The enzyme catalyses peniprequinolone + A = yaequinolone E + AH2. It functions in the pathway secondary metabolite biosynthesis. Its pathway is alkaloid biosynthesis. It participates in mycotoxin biosynthesis. Functionally, FAD-linked oxidoreductase; part of the gene cluster that mediates the biosynthesis of penigequinolones, potent insecticidal alkaloids that contain a highly modified 10-carbon prenyl group. The first stage is catalyzed by the nonribosomal peptide synthetase penN that condenses anthranilic acid and O-methyl-L-tyrosine to produce 4'-methoxycyclopeptin. 4'-methoxycyclopeptin is then converted to 4'-methoxydehydrocyclopeptin by the ketoglutarate-dependent dioxygenase penM through dehydrogenation to form a double bond between C-alpha and C-beta of the O-methyltyrosine side chain. PenM also converts its first product methoxydehydrocyclopeptin to 4'-methoxycyclopenin. The following conversion of 4'methoxycyclopenin into 4'-methoxyviridicatin is catalyzed by the cyclopenase penL. 4'-methoxyviridicatin is the precursor of quinolone natural products, and is further converted to quinolinone B. The prenyltransferase penI then catalyzes the canonical Friedel-Crafts alkylation of quinolinone B with dimethylallyl cation to yield dimethylallyl quinolone, which is subjected to FAD-dependent dehydrogenation by the FAD-linked oxidoreductase penH to yield conjugated aryl diene. The delta(3') double bond then serves as the site of the second alkylation with DMAPP catalyzed by the prenyltransferase penG to yield a carbenium ion intermediate, which can be attacked by H(2)O to yield a styrenyl quinolone containing a C3'-hydroxyprenyl chain, or undergo cyclization to yield yaequinolones J1 and J2. The conversion of the styrenyl quinolone into the tetrahydrofuran-containing yaequinolone C is performed by the FAD-dependent monooxygenase penE and involves epoxidation of the terminal C7'-C8' olefin, followed by epoxide ring opening initiated by the C3' hydroxyl group. The predicted cysteine hydrolase penJ acts as an epoxide hydrolase that enhances the rate of the 5-exo-tet cyclization step, increasing the yield of yaequinolone C. PenF catalyzes the cationic rearrangement of the epoxide formed by penE (before ring opening to produce yaequinolone C) into yaequinolone D. Finally, the short-chain dehydrogenase/reductase (SDR)-like reductase penD, catalyzes both the dehydration of yaequinolone D and the reduction of the resulting oxonium to yield penigequinolone. The sequence is that of FAD-linked oxidoreductase penH from Penicillium thymicola.